A 156-amino-acid chain; its full sequence is Acyl carrier protein, mitochondrial (156 aa).

Residues 1-68 (MASRVLCACV…GTVTHLCRQY (68 aa)) constitute a mitochondrion transit peptide. The 76-residue stretch at 77-152 (DGIKDRVLYV…EIVDYIADKK (76 aa)) folds into the Carrier domain. Lys-88 is modified (N6-acetyllysine). Ser-112 carries the post-translational modification O-(pantetheine 4'-phosphoryl)serine.

This sequence belongs to the acyl carrier protein (ACP) family. In terms of assembly, mammalian complex I is composed of 45 different subunits. Interacts with ETFRF1. Identified in a complex composed of MALSU1, MIEF1 upstream open reading frame protein and NDUFAB1; within the trimeric complex, MIEF1 upstream open reading frame protein functions as a bridging scaffold that interacts with MALSU1 on one side, and with NDUFAB1 on the other side. The complex interacts with the mitochondrial large ribosomal subunit. Interacts with alpha-1-microglobulin chain; this interaction is required for the maintenance of mitochondrial redox homeostasis. Component of the mitochondrial core iron-sulfur cluster (ISC) complex composed of NFS1, LYRM4, NDUFAB1, ISCU, FXN, and FDX2; this complex is a heterohexamer containing two copies of each monomer. Component of the cyteine desulfurase complex composed of NFS1, LYRM4 and NDUFAB1; this complex contributes to the stability and cysteine desulfurase activity of NFS1. In terms of processing, phosphopantetheinylation at Ser-112 is essential for interactions with LYR motif-containing proteins.

It is found in the mitochondrion. Its function is as follows. Carrier of the growing fatty acid chain in fatty acid biosynthesis. Accessory and non-catalytic subunit of the mitochondrial membrane respiratory chain NADH dehydrogenase (Complex I), which functions in the transfer of electrons from NADH to the respiratory chain. Accessory protein, of the core iron-sulfur cluster (ISC) assembly complex, that regulates, in association with LYRM4, the stability and the cysteine desulfurase activity of NFS1 and participates in the [2Fe-2S] clusters assembly on the scaffolding protein ISCU. The core iron-sulfur cluster (ISC) assembly complex is involved in the de novo synthesis of a [2Fe-2S] cluster, the first step of the mitochondrial iron-sulfur protein biogenesis. This process is initiated by the cysteine desulfurase complex (NFS1:LYRM4:NDUFAB1) that produces persulfide which is delivered on the scaffold protein ISCU in a FXN-dependent manner. Then this complex is stabilized by FDX2 which provides reducing equivalents to accomplish the [2Fe-2S] cluster assembly. Finally, the [2Fe-2S] cluster is transferred from ISCU to chaperone proteins, including HSCB, HSPA9 and GLRX5. The polypeptide is Acyl carrier protein, mitochondrial (Mus musculus (Mouse)).